A 326-amino-acid polypeptide reads, in one-letter code: Transposase for insertion sequence element IS4351 (326 aa).

An Integrase catalytic domain is found at 156–317 (IDERPEIVEL…TPNEKFKQII (162 aa)).

The protein belongs to the transposase IS30 family.

Required for the transposition of the insertion element. The sequence is that of Transposase for insertion sequence element IS4351 from Bacteroides fragilis.